Reading from the N-terminus, the 995-residue chain is Translation initiation factor IF-2 (995 aa).

Residues 53–399 form a disordered region; the sequence is NNAGSPAPAA…SGAPRGQGQV (347 aa). 2 stretches are compositionally biased toward pro residues: residues 60-87 and 104-119; these read PAAP…PPGG and TPGP…PPQS. The segment covering 135-160 has biased composition (low complexity); sequence AAAEARAAALKAEQEAAVKAAQAARQ. Residues 161–171 are compositionally biased toward basic and acidic residues; the sequence is QQRENVRREPP. Positions 177–192 are enriched in pro residues; that stretch reads RPGPRPGPGTMPPRPG. Over residues 193 to 202 the composition is skewed to low complexity; it reads SPAAGRSGAP. 2 stretches are compositionally biased toward pro residues: residues 203–213 and 242–264; these read APGPGPRPGGR and RPSP…PSPA. Over residues 273 to 363 the composition is skewed to gly residues; it reads RPGGPGSGRP…GAAGAFGRPG (91 aa). Basic residues predominate over residues 367-376; sequence TRGRKSKKQR. In terms of domain architecture, tr-type G spans 486 to 658; it reads SRPPVVTVMG…VLLTADASLE (173 aa). The tract at residues 495–502 is G1; sequence GHVDHGKT. Residue 495-502 coordinates GTP; that stretch reads GHVDHGKT. The interval 520–524 is G2; that stretch reads GITQH. A G3 region spans residues 545–548; it reads DTPG. GTP is bound by residues 545-549 and 599-602; these read DTPGH and NKID. Residues 599 to 602 form a G4 region; it reads NKID. The G5 stretch occupies residues 635–637; the sequence is AAK.

It belongs to the TRAFAC class translation factor GTPase superfamily. Classic translation factor GTPase family. IF-2 subfamily.

Its subcellular location is the cytoplasm. One of the essential components for the initiation of protein synthesis. Protects formylmethionyl-tRNA from spontaneous hydrolysis and promotes its binding to the 30S ribosomal subunits. Also involved in the hydrolysis of GTP during the formation of the 70S ribosomal complex. In Salinispora arenicola (strain CNS-205), this protein is Translation initiation factor IF-2.